The chain runs to 236 residues: MGVEGCTKCIKYLLFVFNFVFWLAGGVILGVALWLRHDPQTTNLLYLELGDKPAPNTFYVGIYILIAVGAVMMFVGFLGCYGAIQESQCLLGTFFTCLVILFACEVAAGIWGFVNKDQIAKDVKQFYDQALQQAVVDDDANNAKAVVKTFHETLDCCGSSTLTALTTSVLKNNLCPSGSNIISNLFKEDCHQKIDDLFSGKLYLIGIAAIVVAVIMIFEMILSMVLCCGIRNSSVY.

Over 1 to 12 (MGVEGCTKCIKY) the chain is Cytoplasmic. Residues 13 to 33 (LLFVFNFVFWLAGGVILGVAL) traverse the membrane as a helical segment. The Extracellular segment spans residues 34 to 63 (WLRHDPQTTNLLYLELGDKPAPNTFYVGIY). Residues 64-84 (ILIAVGAVMMFVGFLGCYGAI) traverse the membrane as a helical segment. The Cytoplasmic portion of the chain corresponds to 85–89 (QESQC). A helical transmembrane segment spans residues 90-112 (LLGTFFTCLVILFACEVAAGIWG). Residues 113 to 201 (FVNKDQIAKD…QKIDDLFSGK (89 aa)) are Extracellular-facing. Disulfide bonds link Cys-156-Cys-190 and Cys-157-Cys-175. The helical transmembrane segment at 202–224 (LYLIGIAAIVVAVIMIFEMILSM) threads the bilayer. Glu-219 provides a ligand contact to cholesterol. The Cytoplasmic segment spans residues 225 to 236 (VLCCGIRNSSVY).

The protein belongs to the tetraspanin (TM4SF) family. As to quaternary structure, homodimer. Part of a complex composed of CD19, CR2/CD21, CD81 and IFITM1/CD225 in the membrane of mature B cells. Interacts (via the second extracellular domain) with CD19; this interaction is initiated early during biosynthesis in the ER and enables trafficking of only properly folded CD19. Part of a complex that includes MHC class II/HLA-DR molecules and IFITM1. Interacts with IFITM1. Interacts with IFITM2 and IFITM3. Part of integrin-tetraspanin complex composed of CD9, CD81, beta-1 and beta-2 integrins in the membrane of monocyte/macrophages. Interacts (via the second extracellular domain) with integrin ITGAV:ITGB3. Interacts with CD247/CD3 zeta, ICAM1 and CD9 at the immune synapse on T cell membrane. Part of a GPCR-tetraspanin complex consisting at least of ADGRG1, CD81, possibly CD9, and GNA11 in which CD81 enhances the association of ADGRG1 with GNA11. Part of a complex composed of CD9, CD81, PTGFRN and IGSF8. Interacts directly with IGSF8. Interacts with CD53 and SCIMP. Interacts with SAMHD1 (via its C-terminus). Interacts with glypican GPC3 and with the transcriptional repressor HHEX; binding to GPC3 decreases the availability of free CD81 for binding to HHEX, resulting in nuclear translocation of HHEX and transcriptional repression. Interacts with CLDN1. Interacts with CLDN6 and CLDN9. Post-translationally, not glycosylated. Likely constitutively palmitoylated at low levels. Protein palmitoylation is up-regulated upon coligation of BCR and CD9-C2R-CD81 complexes in lipid rafts.

Its subcellular location is the cell membrane. It is found in the basolateral cell membrane. Functionally, structural component of specialized membrane microdomains known as tetraspanin-enriched microdomains (TERMs), which act as platforms for receptor clustering and signaling. Essential for trafficking and compartmentalization of CD19 receptor on the surface of activated B cells. Upon initial encounter with microbial pathogens, enables the assembly of CD19-CR2/CD21 and B cell receptor (BCR) complexes at signaling TERMs, lowering the threshold dose of antigen required to trigger B cell clonal expansion and antibody production. In T cells, facilitates the localization of CD247/CD3 zeta at antigen-induced synapses with B cells, providing for costimulation and polarization toward T helper type 2 phenotype. Present in MHC class II compartments, may also play a role in antigen presentation. Can act both as positive and negative regulator of homotypic or heterotypic cell-cell fusion processes. Positively regulates sperm-egg fusion and may be involved in acrosome reaction. In myoblasts, associates with CD9 and PTGFRN and inhibits myotube fusion during muscle regeneration. In macrophages, associates with CD9 and beta-1 and beta-2 integrins, and prevents macrophage fusion into multinucleated giant cells specialized in ingesting complement-opsonized large particles. Also prevents the fusion of mononuclear cell progenitors into osteoclasts in charge of bone resorption. May regulate the compartmentalization of enzymatic activities. In T cells, defines the subcellular localization of dNTPase SAMHD1 and permits its degradation by the proteasome, thereby controlling intracellular dNTP levels. Also involved in cell adhesion and motility. Positively regulates integrin-mediated adhesion of macrophages, particularly relevant for the inflammatory response in the lung. The polypeptide is CD81 antigen (CD81) (Pan troglodytes (Chimpanzee)).